The primary structure comprises 360 residues: Photosystem II protein D1 (360 aa).

3 helical membrane passes run 29–46, 118–133, and 142–156; these read YIGW…TATT, HFLL…EWEF, and WISV…AASA. Residue H118 coordinates chlorophyll a. Residue W126 participates in pheophytin a binding. [CaMn4O5] cluster contacts are provided by D170 and E189. Residues 197–218 traverse the membrane as a helical segment; that stretch reads FHQLGVAGVFGGSLFSAMHGSL. H198 provides a ligand contact to chlorophyll a. Residues H215 and 264-265 each bind a quinone; that span reads SF. H215 is a Fe cation binding site. H272 is a binding site for Fe cation. A helical transmembrane segment spans residues 274-288; sequence FLGLWPVVGIWFTAL. [CaMn4O5] cluster is bound by residues H332, E333, D342, and A344. Residues 345–360 constitute a propeptide that is removed on maturation; sequence SGESLPVALTAPAVIG.

It belongs to the reaction center PufL/M/PsbA/D family. PSII is composed of 1 copy each of membrane proteins PsbA, PsbB, PsbC, PsbD, PsbE, PsbF, PsbH, PsbI, PsbJ, PsbK, PsbL, PsbM, PsbT, PsbX, PsbY, PsbZ, Psb30/Ycf12, at least 3 peripheral proteins of the oxygen-evolving complex and a large number of cofactors. It forms dimeric complexes. The cofactor is The D1/D2 heterodimer binds P680, chlorophylls that are the primary electron donor of PSII, and subsequent electron acceptors. It shares a non-heme iron and each subunit binds pheophytin, quinone, additional chlorophylls, carotenoids and lipids. D1 provides most of the ligands for the Mn4-Ca-O5 cluster of the oxygen-evolving complex (OEC). There is also a Cl(-1) ion associated with D1 and D2, which is required for oxygen evolution. The PSII complex binds additional chlorophylls, carotenoids and specific lipids.. In terms of processing, tyr-161 forms a radical intermediate that is referred to as redox-active TyrZ, YZ or Y-Z. Post-translationally, C-terminally processed by CTPA; processing is essential to allow assembly of the oxygen-evolving complex and thus photosynthetic growth.

It localises to the plastid. Its subcellular location is the chloroplast thylakoid membrane. The catalysed reaction is 2 a plastoquinone + 4 hnu + 2 H2O = 2 a plastoquinol + O2. Functionally, photosystem II (PSII) is a light-driven water:plastoquinone oxidoreductase that uses light energy to abstract electrons from H(2)O, generating O(2) and a proton gradient subsequently used for ATP formation. It consists of a core antenna complex that captures photons, and an electron transfer chain that converts photonic excitation into a charge separation. The D1/D2 (PsbA/PsbD) reaction center heterodimer binds P680, the primary electron donor of PSII as well as several subsequent electron acceptors. The chain is Photosystem II protein D1 from Guillardia theta (Cryptophyte).